A 277-amino-acid polypeptide reads, in one-letter code: Thymidylate synthase (277 aa).

A dUMP-binding site is contributed by arginine 21. Histidine 51 lines the (6R)-5,10-methylene-5,6,7,8-tetrahydrofolate pocket. DUMP is bound at residue 126–127; that stretch reads RR. The Nucleophile role is filled by cysteine 159. DUMP-binding positions include 179–182, asparagine 190, and 220–222; these read RSSD and HAY. Aspartate 182 provides a ligand contact to (6R)-5,10-methylene-5,6,7,8-tetrahydrofolate. A (6R)-5,10-methylene-5,6,7,8-tetrahydrofolate-binding site is contributed by alanine 276.

It belongs to the thymidylate synthase family. Bacterial-type ThyA subfamily. In terms of assembly, homodimer.

It localises to the cytoplasm. The enzyme catalyses dUMP + (6R)-5,10-methylene-5,6,7,8-tetrahydrofolate = 7,8-dihydrofolate + dTMP. It participates in pyrimidine metabolism; dTTP biosynthesis. Catalyzes the reductive methylation of 2'-deoxyuridine-5'-monophosphate (dUMP) to 2'-deoxythymidine-5'-monophosphate (dTMP) while utilizing 5,10-methylenetetrahydrofolate (mTHF) as the methyl donor and reductant in the reaction, yielding dihydrofolate (DHF) as a by-product. This enzymatic reaction provides an intracellular de novo source of dTMP, an essential precursor for DNA biosynthesis. The protein is Thymidylate synthase of Pseudomonas fluorescens (strain SBW25).